The chain runs to 146 residues: Hemoglobin subunit beta (146 aa).

A Globin domain is found at 2–146 (HWSAEEKQLI…VAHALARKYH (145 aa)). 2 residues coordinate heme b: H63 and H92.

It belongs to the globin family. Heterotetramer of two alpha chains and two beta chains. In terms of tissue distribution, red blood cells.

Involved in oxygen transport from the lung to the various peripheral tissues. This Phasianus colchicus colchicus (Black-necked pheasant) protein is Hemoglobin subunit beta (HBB).